Reading from the N-terminus, the 333-residue chain is ATP synthase subunit a (333 aa).

Positions 1 to 32 (MIYLHNKRKGMLKRLSALIVIGLLMNLPAVFA) are cleaved as a signal peptide. The next 7 helical transmembrane spans lie at 100–120 (HVVMMWIAAAILLLIMFGVGN), 161–181 (FMPFLLTIFFFILVCNLIGLV), 185–205 (ATATGNINVTATLAIFTFLVT), 229–249 (LMWIIMVPVEFIGLFTKPFAL), 254–274 (FANMTAGHIVIISLLGLIFVF), 279–299 (IAPVSVAFALFIYLLEILVAF), and 300–320 (LQAYIFTLLSALFIGMAVAHE).

It belongs to the ATPase A chain family. In terms of assembly, F-type ATPases have 2 components, CF(1) - the catalytic core - and CF(0) - the membrane proton channel. CF(1) has five subunits: alpha(3), beta(3), gamma(1), delta(1), epsilon(1). CF(0) has four main subunits: a, b, b' and c.

The protein localises to the cell inner membrane. In terms of biological role, key component of the proton channel; it plays a direct role in the translocation of protons across the membrane. In Chloroherpeton thalassium (strain ATCC 35110 / GB-78), this protein is ATP synthase subunit a.